Here is a 94-residue protein sequence, read N- to C-terminus: Ferredoxin-like protein (94 aa).

4Fe-4S ferredoxin-type domains are found at residues 20-52 and 53-83; these read PHIR…RETN and GKVT…WEWP.

This sequence to ferredoxins from P.putida and C.tartarivorum, ferredoxin I from A.vinelandii, ferredoxin II from D.desulfuricans.

Its function is as follows. Could be a 3Fe-4S cluster-containing protein. The protein is Ferredoxin-like protein (fixX) of Azotobacter vinelandii.